Reading from the N-terminus, the 702-residue chain is Putative methyltransferase NSUN7 (702 aa).

The active-site Nucleophile is the cysteine 424. Disordered regions lie at residues 522–541 (KSSK…TKAA), 567–593 (ETVT…KHKL), and 675–702 (PTPS…RRWL). A compositionally biased stretch (basic residues) spans 523–534 (SSKREKKKKKSK). Residues 567 to 587 (ETVTKPSLPQKNTAQVGASSQ) show a composition bias toward polar residues. Over residues 681–691 (RKGEKPKDDTR) the composition is skewed to basic and acidic residues.

This sequence belongs to the class I-like SAM-binding methyltransferase superfamily. RsmB/NOP family.

May have S-adenosyl-L-methionine-dependent methyl-transferase activity. The polypeptide is Putative methyltransferase NSUN7 (NSUN7) (Macaca fascicularis (Crab-eating macaque)).